The chain runs to 499 residues: tRNA (guanine(37)-N(1))-methyltransferase (499 aa).

A mitochondrion-targeting transit peptide spans 1–44; the sequence is MKIALPVFQKFNRLISSCKMSGVFPYNPPVNRQMRELDRSFFIT. S-adenosyl-L-methionine contacts are provided by residues His-268, 307 to 308, 335 to 336, and Asn-399; these read DL and DG.

This sequence belongs to the class I-like SAM-binding methyltransferase superfamily. TRM5/TYW2 family. As to quaternary structure, monomer.

The protein localises to the mitochondrion matrix. It is found in the nucleus. The protein resides in the cytoplasm. The catalysed reaction is guanosine(37) in tRNA + S-adenosyl-L-methionine = N(1)-methylguanosine(37) in tRNA + S-adenosyl-L-homocysteine + H(+). Specifically methylates the N1 position of guanosine-37 in various cytoplasmic and mitochondrial tRNAs. Methylation is not dependent on the nature of the nucleoside 5' of the target nucleoside. This is the first step in the biosynthesis of wybutosine (yW), a modified base adjacent to the anticodon of tRNAs and required for accurate decoding. Postspliced cytoplasmic tRNAs are imported into the nucleus, where this first step seems to take place, after which they are reexported to the cytoplasm, where the yW sythesis is completed by cytoplasmic enzymes. The chain is tRNA (guanine(37)-N(1))-methyltransferase from Saccharomyces cerevisiae (strain ATCC 204508 / S288c) (Baker's yeast).